Here is a 689-residue protein sequence, read N- to C-terminus: Glycine--tRNA ligase beta subunit (689 aa).

Belongs to the class-II aminoacyl-tRNA synthetase family. In terms of assembly, tetramer of two alpha and two beta subunits.

It is found in the cytoplasm. It catalyses the reaction tRNA(Gly) + glycine + ATP = glycyl-tRNA(Gly) + AMP + diphosphate. The sequence is that of Glycine--tRNA ligase beta subunit from Serratia proteamaculans (strain 568).